A 624-amino-acid chain; its full sequence is (-)-beta-phellandrene synthase 1, chloroplastic (624 aa).

Residues 1 to 48 constitute a chloroplast transit peptide; that stretch reads MAIVSSVPLASKSCLHKSLISSIHKLKPFCRTIPTLGMSRPGKYVMPS. Positions 375, 379, and 527 each coordinate Mg(2+). The short motif at 375-379 is the DDXXD motif element; the sequence is DDMYD.

It belongs to the terpene synthase family. Tpsd subfamily. The cofactor is Mg(2+). Mn(2+) serves as cofactor.

It localises to the plastid. Its subcellular location is the chloroplast. The enzyme catalyses (2E)-geranyl diphosphate = (-)-beta-phellandrene + diphosphate. Its pathway is terpene metabolism; oleoresin biosynthesis. In terms of biological role, terpene synthase (TPS) involved in the biosynthesis of monoterpene natural products included in conifer oleoresin secretions and volatile emissions; these compounds contribute to biotic and abiotic stress defense against herbivores and pathogens. Catalyzes the conversion of (2E)-geranyl diphosphate (GPP) to (-)-beta-phellandrene. In Picea sitchensis (Sitka spruce), this protein is (-)-beta-phellandrene synthase 1, chloroplastic.